An 88-amino-acid chain; its full sequence is Small ribosomal subunit protein bS20 (88 aa).

A disordered region spans residues 1–36 (MANTSSAKKATRKIARRTAVNKSRRTQMRGSVRTVE).

This sequence belongs to the bacterial ribosomal protein bS20 family.

Binds directly to 16S ribosomal RNA. The polypeptide is Small ribosomal subunit protein bS20 (Rhodopseudomonas palustris (strain HaA2)).